The following is a 680-amino-acid chain: Pescadillo homolog (680 aa).

Positions 315–336 (GEDEKPKAITNGEGESETPTDA) are disordered. Residues 359 to 471 (DPSQLFANCT…ELKEPNQYAP (113 aa)) enclose the BRCT domain. The tract at residues 494 to 680 (VPLEEQQTEA…ERKMAKGKAT (187 aa)) is disordered. Composition is skewed to acidic residues over residues 511–530 (DVED…DDEA), 543–556 (GSDD…EEAD), and 565–576 (AEVDDASEDDEQ). 3 stretches are compositionally biased toward basic and acidic residues: residues 597–610 (KASE…DPKS), 617–635 (RKEL…ERAK), and 654–664 (NKKDAESEKLR). A coiled-coil region spans residues 609 to 680 (KSKAKQQKRK…ERKMAKGKAT (72 aa)). Over residues 665–680 (EKRRRIERKMAKGKAT) the composition is skewed to basic residues.

Belongs to the pescadillo family. Component of the NOP7 complex, composed of ERB1, NOP7 and YTM1. The complex is held together by ERB1, which interacts with NOP7 via its N-terminal domain and with YTM1 via a high-affinity interaction between the seven-bladed beta-propeller domains of the 2 proteins. The NOP7 complex associates with the 66S pre-ribosome.

Its subcellular location is the nucleus. It localises to the nucleolus. The protein localises to the nucleoplasm. Component of the NOP7 complex, which is required for maturation of the 25S and 5.8S ribosomal RNAs and formation of the 60S ribosome. The chain is Pescadillo homolog from Pyricularia oryzae (strain 70-15 / ATCC MYA-4617 / FGSC 8958) (Rice blast fungus).